Here is a 364-residue protein sequence, read N- to C-terminus: MSQNSLRLVEDKSVDKSKALEAALSQIERSFGKGSIMKLGSNENVVEIETISTGSLGLDIALGVGGLPRGRIIEIYGPESSGKTTLALQTIAEAQKKGGICAFVDAEHALDPVYARKLGVDLQNLLISQPDTGEQALEITDTLVRSGAVDVLVVDSVAALTPRAEIEGEMGDSLPGLQARLMSQALRKLTASISKSNTMVIFINQIRMKIGVMFGSPETTTGGNALKFYASVRLDIRRIGAVKEREEVIGNQTRVKVVKNKMAPPFKQVEFDIMYGEGVSKTGELVDLGVKAGIVEKSGAWFSYNSQRLGQGRENAKTFLRDNPDLAREIELSLRQNAGLIADRFLQNGGPDPDDGDGDATAEM.

ATP is bound at residue 77–84; that stretch reads GPESSGKT. A disordered region spans residues 343–364; it reads DRFLQNGGPDPDDGDGDATAEM. Positions 352–364 are enriched in acidic residues; the sequence is DPDDGDGDATAEM.

The protein belongs to the RecA family.

The protein localises to the cytoplasm. In terms of biological role, can catalyze the hydrolysis of ATP in the presence of single-stranded DNA, the ATP-dependent uptake of single-stranded DNA by duplex DNA, and the ATP-dependent hybridization of homologous single-stranded DNAs. It interacts with LexA causing its activation and leading to its autocatalytic cleavage. The sequence is that of Protein RecA from Rhizobium johnstonii (strain DSM 114642 / LMG 32736 / 3841) (Rhizobium leguminosarum bv. viciae).